Reading from the N-terminus, the 138-residue chain is Thyrotropin subunit beta (138 aa).

Positions 1-20 are cleaved as a signal peptide; that stretch reads MTALFLMSMLFGLTCGQAMS. Cystine bridges form between cysteine 22–cysteine 72, cysteine 36–cysteine 87, cysteine 39–cysteine 125, cysteine 47–cysteine 103, cysteine 51–cysteine 105, and cysteine 108–cysteine 115. Asparagine 43 is a glycosylation site (N-linked (GlcNAc...) asparagine). A propeptide spanning residues 133 to 138 is cleaved from the precursor; that stretch reads LVGFSV.

This sequence belongs to the glycoprotein hormones subunit beta family. Heterodimer of a common alpha chain and a unique beta chain which confers biological specificity to thyrotropin, lutropin, follitropin and gonadotropin.

It localises to the secreted. Functionally, indispensable for the control of thyroid structure and metabolism. The chain is Thyrotropin subunit beta (TSHB) from Homo sapiens (Human).